We begin with the raw amino-acid sequence, 264 residues long: Regulatory protein RecX (264 aa).

Belongs to the RecX family.

Its subcellular location is the cytoplasm. In terms of biological role, negatively modulates RecA activity. This chain is Regulatory protein RecX, found in Bacillus subtilis (strain 168).